We begin with the raw amino-acid sequence, 876 residues long: DDB1- and CUL4-associated factor 6 (876 aa).

5 WD repeats span residues V49–T88, G92–R133, C139–K179, N189–T229, and N251–L290. 2 stretches are compositionally biased toward basic and acidic residues: residues R288–R303 and L312–E334. Disordered stretches follow at residues R288–S340, E355–N391, L408–T485, W498–L645, and E658–D691. S336 is modified (phosphoserine). Composition is skewed to polar residues over residues T375–N391 and Q409–A422. A compositionally biased stretch (basic and acidic residues) spans H456–S466. The segment covering S499–S510 has biased composition (low complexity). Over residues S534–E544 the composition is skewed to basic and acidic residues. Composition is skewed to polar residues over residues E550–L562, D571–S584, E603–H613, and P621–L645. Residue S665 is modified to Phosphoserine. The residue at position 670 (T670) is a Phosphothreonine. S673 is subject to Phosphoserine. The IQ domain maps to R692–R721. 2 WD repeats span residues N734 to L772 and A775 to N814. 2 positions are modified to phosphoserine: S863 and S866.

In terms of assembly, interacts with the nuclear receptors NR3C1 and AR in the presence of ligand. Interacts with DDB1, CUL4A and CUL4B.

The protein localises to the nucleus. It participates in protein modification; protein ubiquitination. Functionally, ligand-dependent coactivator of nuclear receptors. Enhance transcriptional activity of the nuclear receptors NR3C1 and AR. May function as a substrate receptor for CUL4-DDB1 E3 ubiquitin-protein ligase complex. This is DDB1- and CUL4-associated factor 6 (Dcaf6) from Mus musculus (Mouse).